The chain runs to 483 residues: GDP-fucose protein O-fucosyltransferase 4 (483 aa).

Residue Met-1 is a topological domain, cytoplasmic. A helical; Signal-anchor for type II membrane protein membrane pass occupies residues 2–21 (ALCLWLFLVLPICCWCQGAV). Residues 22–483 (DLGDSGVFQP…RARGLSNDSR (462 aa)) lie on the Lumenal side of the membrane. Asn-151 and Asn-303 each carry an N-linked (GlcNAc...) asparagine glycan. Cys-374 and Cys-377 form a disulfide bridge. A disordered region spans residues 387-425 (RKAHRKNPKQNQPPQPKMANSSHMGCPLPSPGYGPVENV). N-linked (GlcNAc...) asparagine glycans are attached at residues Asn-406, Asn-428, Asn-456, and Asn-480.

The protein belongs to the glycosyltransferase 10 family.

It localises to the endoplasmic reticulum membrane. The catalysed reaction is L-threonyl-[protein] + GDP-beta-L-fucose = 3-O-(alpha-L-fucosyl)-L-threonyl-[protein] + GDP + H(+). It carries out the reaction L-seryl-[protein] + GDP-beta-L-fucose = 3-O-(alpha-L-fucosyl)-L-seryl-[protein] + GDP + H(+). It participates in protein modification; protein glycosylation. Its function is as follows. Protein O-fucosyltransferase that specifically catalyzes O-fucosylation of serine or threonine residues in EMI domains of target proteins. Attaches fucose through an O-glycosidic linkage. O-fucosylation of EMI domain-containing proteins may be required for facilitating protein folding and secretion. This is GDP-fucose protein O-fucosyltransferase 4 (fut11) from Danio rerio (Zebrafish).